A 461-amino-acid polypeptide reads, in one-letter code: Ribitol-5-phosphate transferase FKTN (461 aa).

The Cytoplasmic segment spans residues 1–7; the sequence is MSRINKN. The required and sufficient for interaction with POMGNT1 stretch occupies residues 6–27; that stretch reads KNVVLALLTLTSSAFLLFQLYY. A helical; Signal-anchor for type II membrane protein transmembrane segment spans residues 8 to 28; the sequence is VVLALLTLTSSAFLLFQLYYY. The Lumenal segment spans residues 29–461; that stretch reads KHYLSARNGP…SEWDEVIQLY (433 aa). Residue N92 is glycosylated (N-linked (GlcNAc...) asparagine).

This sequence belongs to the LicD transferase family. Forms a complex composed of FKTN/fukutin, FKRP and RXYLT1/TMEM5. Interacts (via transmembrane domain) with POMGNT1; the interaction is direct and is required for normal POMGNT1 location in Golgi membranes. As to expression, expressed in the retina, with highest levels found in the inner segments of photoreceptors and the outer plexiform layer (at protein level). Expressed at lower levels in the inner and outer nuclear layers, the inner plexiform layers, and the ganglion cell layers of the retina (at protein level). Expressed in the heart, brain, spleen, lung, liver, skeletal muscle, kidney and testis.

It localises to the golgi apparatus membrane. The protein resides in the cytoplasm. Its subcellular location is the nucleus. The protein localises to the endoplasmic reticulum. The enzyme catalyses 3-O-[beta-D-GalNAc-(1-&gt;3)-beta-D-GlcNAc-(1-&gt;4)-(O-6-P-alpha-D-Man)]-Thr-[protein] + CDP-L-ribitol = 3-O-[Rib-ol-P-3-beta-D-GalNAc-(1-&gt;3)-beta-D-GlcNAc-(1-&gt;4)-(O-6-P-alpha-D-Man)]-Thr-[protein] + CMP + H(+). It functions in the pathway protein modification; protein glycosylation. Catalyzes the transfer of CDP-ribitol to the distal N-acetylgalactosamine of the phosphorylated O-mannosyl trisaccharide (N-acetylgalactosamine-beta-3-N-acetylglucosamine-beta-4-(phosphate-6-)mannose), a carbohydrate structure present in alpha-dystroglycan (DAG1). This constitutes the first step in the formation of the ribitol 5-phosphate tandem repeat which links the phosphorylated O-mannosyl trisaccharide to the ligand binding moiety composed of repeats of 3-xylosyl-alpha-1,3-glucuronic acid-beta-1. Required for normal location of POMGNT1 in Golgi membranes, and for normal POMGNT1 activity. May interact with and reinforce a large complex encompassing the outside and inside of muscle membranes. Could be involved in brain development. This chain is Ribitol-5-phosphate transferase FKTN, found in Mus musculus (Mouse).